Here is a 396-residue protein sequence, read N- to C-terminus: Pyruvate dehydrogenase E1 component subunit alpha type I, mitochondrial (396 aa).

The transit peptide at 1 to 25 directs the protein to the mitochondrion; it reads MIFVFANIFKVPTVSPSVMAISVRL. Positions 88, 114, 115, 153, 161, 163, 192, 193, 194, 221, and 223 each coordinate pyruvate. The thiamine diphosphate site is built by Tyr-114 and Arg-115. Residues Gly-161, Val-163, Asp-192, Gly-193, Ala-194, and Asn-221 each contribute to the thiamine diphosphate site. Asp-192 lines the Mg(2+) pocket. Positions 221 and 223 each coordinate Mg(2+). His-288 lines the thiamine diphosphate pocket. 2 positions are modified to phosphoserine: Ser-289 and Ser-296.

As to quaternary structure, heterotetramer of two PDHA1 and two PDHB subunits. The heterotetramer interacts with DLAT, and is part of the multimeric pyruvate dehydrogenase complex that contains multiple copies of pyruvate dehydrogenase (E1), dihydrolipoamide acetyltransferase (DLAT, E2) and lipoamide dehydrogenase (DLD, E3). The cofactor is thiamine diphosphate. Requires Mg(2+) as cofactor.

It localises to the mitochondrion matrix. It carries out the reaction N(6)-[(R)-lipoyl]-L-lysyl-[protein] + pyruvate + H(+) = N(6)-[(R)-S(8)-acetyldihydrolipoyl]-L-lysyl-[protein] + CO2. Pyruvate dehydrogenase activity is inhibited by phosphorylation of PDHA1; it is reactivated by dephosphorylation. The pyruvate dehydrogenase complex catalyzes the overall conversion of pyruvate to acetyl-CoA and CO(2), and thereby links the glycolytic pathway to the tricarboxylic cycle. This chain is Pyruvate dehydrogenase E1 component subunit alpha type I, mitochondrial, found in Ascaris suum (Pig roundworm).